The primary structure comprises 1783 residues: Trans-splicing factor Raa3, chloroplastic (1783 aa).

A chloroplast-targeting transit peptide spans 1 to 40 (MKADLATAKGSSPAFSAPRTYRARLLSRCLNKCFNTVLVS). 8 disordered regions span residues 97–378 (ATTH…VGVN), 420–484 (ATSA…VAAQ), 563–610 (ARVG…SATK), 652–709 (STEP…SPAA), 918–971 (AAPT…QRAS), 1395–1427 (RDAK…QQHQ), 1476–1506 (PAPA…RRSR), and 1620–1639 (VKGR…DVQG). Residues 105–118 (DSGGQGPAAAGGRG) show a composition bias toward gly residues. Composition is skewed to low complexity over residues 126–157 (QAAA…PQRP), 186–205 (AVDA…PAPA), and 224–242 (AGKP…VGPQ). Over residues 256–273 (DESHMGLTHRDQGHDERI) the composition is skewed to basic and acidic residues. A compositionally biased stretch (low complexity) spans 277 to 289 (AGEAWKAGAVAAP). The segment covering 307 to 316 (LASSALGTHS) has biased composition (polar residues). 7 stretches are compositionally biased toward low complexity: residues 343–374 (SGSS…ITSN), 420–436 (ATSA…SSSS), 577–599 (RPVQ…SQPG), 655–669 (PLAA…ASAS), 676–709 (SSSN…SPAA), 928–970 (SAAA…PQRA), and 1403–1417 (QSAA…AAQD). Composition is skewed to basic residues over residues 1494-1506 (KSRR…RRSR) and 1620-1630 (VKGRGRGRRTA). An RAP domain is found at 1713–1772 (LAVGAAAGGAVIRNSRWLLSGAGALRRRLLTHAGWLVVPVRERQWKDLRSAEQQRRVVRE).

As to quaternary structure, part of a 1700 kDa complex that includes the precursor RNA to exon 1 and the tscA RNA.

It is found in the plastid. The protein resides in the chloroplast stroma. Its function is as follows. Required for trans-splicing of exons 1 and 2 of the chloroplast encoded psaA mRNA (a group II intron). May be required for stability of the chloroplast RNA-protein complex in which it is found. The sequence is that of Trans-splicing factor Raa3, chloroplastic (RAA3) from Chlamydomonas reinhardtii (Chlamydomonas smithii).